The following is a 29-amino-acid chain: Inorganic pyrophosphatase (29 aa).

The protein resides in the periplasm. It catalyses the reaction diphosphate + H2O = 2 phosphate + H(+). Inorganic pyrophosphatase is an essential enzyme for the activation of sulfate by sulfate reducing bacteria. This is a high activity pyrophosphatase. The chain is Inorganic pyrophosphatase from Nitratidesulfovibrio vulgaris (strain ATCC 29579 / DSM 644 / CCUG 34227 / NCIMB 8303 / VKM B-1760 / Hildenborough) (Desulfovibrio vulgaris).